The chain runs to 166 residues: Small ribosomal subunit protein uS5 (166 aa).

Residues 11 to 74 form the S5 DRBM domain; sequence LVEKLVAVDR…EAARRNMITV (64 aa).

It belongs to the universal ribosomal protein uS5 family. As to quaternary structure, part of the 30S ribosomal subunit. Contacts proteins S4 and S8.

Its function is as follows. With S4 and S12 plays an important role in translational accuracy. Located at the back of the 30S subunit body where it stabilizes the conformation of the head with respect to the body. This chain is Small ribosomal subunit protein uS5, found in Acinetobacter baumannii (strain ATCC 17978 / DSM 105126 / CIP 53.77 / LMG 1025 / NCDC KC755 / 5377).